Here is a 326-residue protein sequence, read N- to C-terminus: Biotin synthase (326 aa).

One can recognise a Radical SAM core domain in the interval 47–274 (NEVQVSSLLS…ASRVRLSAGR (228 aa)). [4Fe-4S] cluster-binding residues include Cys-62, Cys-66, and Cys-69. [2Fe-2S] cluster is bound by residues Cys-106, Cys-137, Cys-197, and Arg-269.

It belongs to the radical SAM superfamily. Biotin synthase family. In terms of assembly, homodimer. [4Fe-4S] cluster is required as a cofactor. Requires [2Fe-2S] cluster as cofactor.

It carries out the reaction (4R,5S)-dethiobiotin + (sulfur carrier)-SH + 2 reduced [2Fe-2S]-[ferredoxin] + 2 S-adenosyl-L-methionine = (sulfur carrier)-H + biotin + 2 5'-deoxyadenosine + 2 L-methionine + 2 oxidized [2Fe-2S]-[ferredoxin]. The protein operates within cofactor biosynthesis; biotin biosynthesis; biotin from 7,8-diaminononanoate: step 2/2. In terms of biological role, catalyzes the conversion of dethiobiotin (DTB) to biotin by the insertion of a sulfur atom into dethiobiotin via a radical-based mechanism. The polypeptide is Biotin synthase (Methylococcus capsulatus (strain ATCC 33009 / NCIMB 11132 / Bath)).